The sequence spans 890 residues: Chloroquine resistance transporter (890 aa).

Disordered stretches follow at residues 1 to 163 (MPPA…EAPL) and 280 to 300 (GMQR…AAEG). The Cytoplasmic segment spans residues 1-349 (MPPAHHGSGG…RATRWIDRNA (349 aa)). Positions 8-19 (SGGRRRPGRGNK) are enriched in basic residues. Low complexity-rich tracts occupy residues 102-126 (APSQ…SSRS) and 134-156 (SPVA…TSAS). Residues 350–372 (ATVRVACYTFLLLVTSTGNTICF) traverse the membrane as a helical segment. Topologically, residues 373 to 391 (KKMIDKMPNYSPCLTQVTT) are vacuolar. A helical membrane pass occupies residues 392–412 (VVFVPVFFALSLYTDYAGGLP). At 413 to 422 (QEMADFPKRN) the chain is on the cytoplasmic side. Residues 423–443 (FAVMGFLDSFSGVMAIIGAVH) form a helical membrane-spanning segment. The Vacuolar portion of the chain corresponds to 444–447 (TTGT). The helical transmembrane segment at 448 to 468 (TQVVLQQSCIVFSLLASIVML) threads the bilayer. Topologically, residues 469–471 (RKR) are cytoplasmic. Residues 472-492 (FHAAHYLGALVIILGVLVVKL) traverse the membrane as a helical segment. Residues 493 to 505 (PDLLHPSSDGGGD) lie on the Vacuolar side of the membrane. A helical membrane pass occupies residues 506 to 526 (VFVFNLLYLLSNLPTAVSCVY). Residues 527–544 (KEVAFRGVEMGTNYLQAW) are Cytoplasmic-facing. Residues 545–565 (VALFQFLIGFLVLPLNALPVL) traverse the membrane as a helical segment. At 566-614 (GPQRVPLAELPASLWNGTRCLFGFNTIVTNCGGAGNMESPCDNCEGAWK) the chain is on the vacuolar side. Asn-581 carries N-linked (GlcNAc...) asparagine glycosylation. 2 disulfides stabilise this stretch: Cys-585–Cys-609 and Cys-596–Cys-606. A helical transmembrane segment spans residues 615-634 (YVGMYLSFNLLYNMFIIFVV). Over 635–640 (KSGGAA) the chain is Cytoplasmic. The helical transmembrane segment at 641–663 (LTFLVSTLRLPVTALAFCSRAIM) threads the bilayer. Over 664 to 673 (GDRAVPPKAT) the chain is Vacuolar. Residues 674–694 (DFYGLLVLILGLVIYRAGGIM) traverse the membrane as a helical segment. Residues 695 to 890 (KRRAQRRAVA…GKSRANNGCI (196 aa)) are Cytoplasmic-facing. The tract at residues 798–871 (AAFTPFTQRM…NRVGGYEPPS (74 aa)) is disordered.

This sequence belongs to the CRT-like transporter family.

It localises to the vacuole membrane. In terms of biological role, nutrient transporter. Involved in maintaining the osmotic homeostasis of the digestive vacuole. Required for the proper organization of the endolysosomal system and, in turn, indirectly for microneme secretion and parasite invasion. Required for bradyzoite viability and cyst development. The chain is Chloroquine resistance transporter from Toxoplasma gondii.